The sequence spans 104 residues: MVKIVTSQAEFDSIISQNELVIVDFFAEWCGPCKRIAPFYEECSKTYTKMVFIKVDVDEVSEVTEKENITSMPTFKVYKNGSSVDTLLGANDSALKQLIEKYAA.

One can recognise a Thioredoxin domain in the interval V2–A104. Residues C30 and C33 each act as nucleophile in the active site. An intrachain disulfide couples C30 to C33.

This sequence belongs to the thioredoxin family. Post-translationally, the disulfide bond between Cys-30 and Cys-33 acts as a redox-active center and is reduced by thioredoxin reductase TRXR.

The protein resides in the cytoplasm. Participates in various redox reactions through the reversible oxidation of its active center dithiol to a disulfide and catalyzes dithiol-disulfide exchange reactions. By modifying the redox status of targeted proteins, induces changes in their structure and activity. Reduces oxidized glutathione (GSSG), thereby acting as a backup for the glutathione redox system. Reduces nitroglutathione (GSNO), a compound involved in the transport of nitric oxide (NO). Also reduces oxidative stress by detoxifying hydrogen peroxide, tert-butyl hydroperoxide and cumene hydroperoxide. Activates ornithine aminotransferase OAT by reducing a disulfide bond in the substrate binding loop, thereby enhancing the affinity of OAT for its substrates. May reduce S-adenosyl-L-homocysteine hydrolase SAHH. The polypeptide is Thioredoxin 1 (Plasmodium falciparum (isolate 3D7)).